Here is a 263-residue protein sequence, read N- to C-terminus: Triosephosphate isomerase (263 aa).

10-12 (NWK) provides a ligand contact to substrate. The active-site Electrophile is the His-104. Catalysis depends on Glu-176, which acts as the Proton acceptor. Substrate is bound by residues Gly-182, Ser-221, and 242 to 243 (GG).

It belongs to the triosephosphate isomerase family. In terms of assembly, homodimer.

It is found in the cytoplasm. The catalysed reaction is D-glyceraldehyde 3-phosphate = dihydroxyacetone phosphate. Its pathway is carbohydrate biosynthesis; gluconeogenesis. The protein operates within carbohydrate degradation; glycolysis; D-glyceraldehyde 3-phosphate from glycerone phosphate: step 1/1. Its function is as follows. Involved in the gluconeogenesis. Catalyzes stereospecifically the conversion of dihydroxyacetone phosphate (DHAP) to D-glyceraldehyde-3-phosphate (G3P). The polypeptide is Triosephosphate isomerase (Haemophilus influenzae (strain ATCC 51907 / DSM 11121 / KW20 / Rd)).